The chain runs to 250 residues: NAD(P)H-quinone oxidoreductase subunit K, chloroplastic (250 aa).

[4Fe-4S] cluster contacts are provided by C61, C62, C126, and C157.

The protein belongs to the complex I 20 kDa subunit family. As to quaternary structure, NDH is composed of at least 16 different subunits, 5 of which are encoded in the nucleus. It depends on [4Fe-4S] cluster as a cofactor.

The protein resides in the plastid. The protein localises to the chloroplast thylakoid membrane. It carries out the reaction a plastoquinone + NADH + (n+1) H(+)(in) = a plastoquinol + NAD(+) + n H(+)(out). It catalyses the reaction a plastoquinone + NADPH + (n+1) H(+)(in) = a plastoquinol + NADP(+) + n H(+)(out). In terms of biological role, NDH shuttles electrons from NAD(P)H:plastoquinone, via FMN and iron-sulfur (Fe-S) centers, to quinones in the photosynthetic chain and possibly in a chloroplast respiratory chain. The immediate electron acceptor for the enzyme in this species is believed to be plastoquinone. Couples the redox reaction to proton translocation, and thus conserves the redox energy in a proton gradient. The protein is NAD(P)H-quinone oxidoreductase subunit K, chloroplastic of Angiopteris evecta (Mule's foot fern).